The following is a 268-amino-acid chain: Undecaprenyl-diphosphatase (268 aa).

7 helical membrane passes run 5-25 (SIIS…IPVS), 43-63 (GNTF…LVYF), 84-104 (FSVL…HGFI), 107-127 (VLFE…IILY), 184-204 (AAEF…ALDL), 213-233 (FDDV…GIFV), and 248-268 (PFAI…WLLG).

It belongs to the UppP family.

It is found in the cell inner membrane. The enzyme catalyses di-trans,octa-cis-undecaprenyl diphosphate + H2O = di-trans,octa-cis-undecaprenyl phosphate + phosphate + H(+). Functionally, catalyzes the dephosphorylation of undecaprenyl diphosphate (UPP). Confers resistance to bacitracin. The polypeptide is Undecaprenyl-diphosphatase (Rhizobium meliloti (strain 1021) (Ensifer meliloti)).